We begin with the raw amino-acid sequence, 162 residues long: Transcription elongation factor GreB (162 aa).

The stretch at 52–76 (GKRRLREIDRRIRFLSKRLEALQII) forms a coiled coil.

It belongs to the GreA/GreB family. GreB subfamily.

In terms of biological role, necessary for efficient RNA polymerase transcription elongation past template-encoded arresting sites. The arresting sites in DNA have the property of trapping a certain fraction of elongating RNA polymerases that pass through, resulting in locked ternary complexes. Cleavage of the nascent transcript by cleavage factors such as GreA or GreB allows the resumption of elongation from the new 3'terminus. GreB releases sequences of up to 9 nucleotides in length. The protein is Transcription elongation factor GreB of Haemophilus ducreyi (strain 35000HP / ATCC 700724).